Reading from the N-terminus, the 76-residue chain is ATP synthase subunit 9, mitochondrial (76 aa).

A run of 2 helical transmembrane segments spans residues isoleucine 14–isoleucine 34 and isoleucine 52–leucine 72.

The protein belongs to the ATPase C chain family. As to quaternary structure, F-type ATPases have 2 components, CF(1) - the catalytic core - and CF(0) - the membrane proton channel. CF(1) has five subunits: alpha(3), beta(3), gamma(1), delta(1), epsilon(1). CF(0) has three main subunits: a, b and c.

Its subcellular location is the mitochondrion membrane. Functionally, mitochondrial membrane ATP synthase (F(1)F(0) ATP synthase or Complex V) produces ATP from ADP in the presence of a proton gradient across the membrane which is generated by electron transport complexes of the respiratory chain. F-type ATPases consist of two structural domains, F(1) - containing the extramembraneous catalytic core and F(0) - containing the membrane proton channel, linked together by a central stalk and a peripheral stalk. During catalysis, ATP synthesis in the catalytic domain of F(1) is coupled via a rotary mechanism of the central stalk subunits to proton translocation. Part of the complex F(0) domain. A homomeric c-ring of probably 10 subunits is part of the complex rotary element. The chain is ATP synthase subunit 9, mitochondrial (ATP9) from Candida albicans (strain SC5314 / ATCC MYA-2876) (Yeast).